Reading from the N-terminus, the 385-residue chain is ADP,ATP carrier protein 2, mitochondrial (385 aa).

The transit peptide at 1-74 (MVEQTQHPTI…ATTTSPVFVQ (74 aa)) directs the protein to the mitochondrion. Solcar repeat units lie at residues 82–175 (TNFA…FKRL), 187–280 (KWFA…VKPV), and 288–374 (DSFF…LQLI). The next 5 helical transmembrane spans lie at 84–111 (FAID…VKLL), 152–176 (TANV…KRLF), 185–205 (YWKW…SSLL), 256–277 (FNIS…YDSV), and 291–311 (FASF…SYPI). Arginine 157 and lysine 169 together coordinate ADP. An ADP-binding site is contributed by arginine 315. Residues 315–320 (RRRMMM) form an important for transport activity region. Positions 315–320 (RRRMMM) match the Nucleotide carrier signature motif motif. The chain crosses the membrane as a helical span at residues 351-371 (AGANILRAVAGAGVLAGYDKL).

It belongs to the mitochondrial carrier (TC 2.A.29) family. Monomer.

The protein localises to the mitochondrion inner membrane. It carries out the reaction ADP(in) + ATP(out) = ADP(out) + ATP(in). With respect to regulation, the matrix-open state (m-state) is inhibited by the membrane-permeable bongkrekic acid (BKA). The cytoplasmic-open state (c-state) is inhibited by the membrane-impermeable toxic inhibitor carboxyatractyloside (CATR). Its function is as follows. ADP:ATP antiporter that mediates import of ADP into the mitochondrial matrix for ATP synthesis, and export of ATP out to fuel the cell. Cycles between the cytoplasmic-open state (c-state) and the matrix-open state (m-state): operates by the alternating access mechanism with a single substrate-binding site intermittently exposed to either the cytosolic (c-state) or matrix (m-state) side of the inner mitochondrial membrane. The sequence is that of ADP,ATP carrier protein 2, mitochondrial (AAC2) from Arabidopsis thaliana (Mouse-ear cress).